Reading from the N-terminus, the 429-residue chain is Saccharopine dehydrogenase-like oxidoreductase (429 aa).

Position 2 is an N-acetylalanine (Ala2). Ser217 carries the phosphoserine modification.

It belongs to the saccharopine dehydrogenase family.

This chain is Saccharopine dehydrogenase-like oxidoreductase (SCCPDH), found in Homo sapiens (Human).